Here is a 490-residue protein sequence, read N- to C-terminus: Aspartyl/glutamyl-tRNA(Asn/Gln) amidotransferase subunit B (490 aa).

It belongs to the GatB/GatE family. GatB subfamily. In terms of assembly, heterotrimer of A, B and C subunits.

It catalyses the reaction L-glutamyl-tRNA(Gln) + L-glutamine + ATP + H2O = L-glutaminyl-tRNA(Gln) + L-glutamate + ADP + phosphate + H(+). The enzyme catalyses L-aspartyl-tRNA(Asn) + L-glutamine + ATP + H2O = L-asparaginyl-tRNA(Asn) + L-glutamate + ADP + phosphate + 2 H(+). Its function is as follows. Allows the formation of correctly charged Asn-tRNA(Asn) or Gln-tRNA(Gln) through the transamidation of misacylated Asp-tRNA(Asn) or Glu-tRNA(Gln) in organisms which lack either or both of asparaginyl-tRNA or glutaminyl-tRNA synthetases. The reaction takes place in the presence of glutamine and ATP through an activated phospho-Asp-tRNA(Asn) or phospho-Glu-tRNA(Gln). The chain is Aspartyl/glutamyl-tRNA(Asn/Gln) amidotransferase subunit B from Burkholderia ambifaria (strain MC40-6).